The primary structure comprises 1307 residues: Cellulose synthase 2 operon protein C (1307 aa).

Residues 1–55 (MTRPRGPAPRDGAAWRRDPARRVLLRDAVRGREGGLRLACAVMAGLIVSGGVACA) form the signal peptide. TPR repeat units follow at residues 97-130 (LELL…EPDN), 270-303 (LDGL…EPIT), 339-372 (AAND…DPHD), 374-406 (DALG…GPDA), 458-491 (LTVL…APRD), 493-525 (GALF…APAM), 528-561 (RLEA…DPDD), 754-787 (IGLA…HPDS), and 788-821 (VEAH…KPAN).

It belongs to the AcsC/BcsC family.

The protein resides in the cell outer membrane. Its pathway is glycan metabolism; bacterial cellulose biosynthesis. In terms of biological role, required for maximal bacterial cellulose synthesis. The polypeptide is Cellulose synthase 2 operon protein C (bcsCII) (Komagataeibacter xylinus (Gluconacetobacter xylinus)).